We begin with the raw amino-acid sequence, 190 residues long: Putative resolvase R80 (190 aa).

Residues 11–30 (SSVLGVHQRTLYQWDKKGWI) constitute a DNA-binding region (H-T-H motif). A Resolvase/invertase-type recombinase catalytic domain is found at 61–190 (LSICYVRVSS…RNGSRKYSNK (130 aa)). Residues 67-92 (RVSSNSQKDDLERQIKFMKKKYPNHT) adopt a coiled-coil conformation. Serine 69 (O-(5'-phospho-DNA)-serine intermediate) is an active-site residue.

The protein belongs to the site-specific recombinase resolvase family.

In terms of biological role, resolvase catalyzes the resolution (a site-specific recombination) of the cointegrated replicon to yield the final transposition products. This Acanthamoeba polyphaga mimivirus (APMV) protein is Putative resolvase R80.